A 61-amino-acid chain; its full sequence is LKCHNKLVPFLSKTCPEGKNLCYKMTLMKMPKIPIKRGCTDACPKSSLLVKVVCCNKDKCN.

Cystine bridges form between Cys-3–Cys-22, Cys-15–Cys-39, Cys-43–Cys-54, and Cys-55–Cys-60.

The protein belongs to the three-finger toxin family. Short-chain subfamily. Type IB cytotoxin sub-subfamily. In terms of tissue distribution, expressed by the venom gland.

It is found in the secreted. Its function is as follows. This protein lyses red blood cells and has cardiotoxic and hypotensive activities. This Hemachatus haemachatus (Rinkhals) protein is Three-finger hemachatoxin.